Consider the following 133-residue polypeptide: Mitochondrial import inner membrane translocase subunit TIM17-3 (133 aa).

4 helical membrane passes run 15-35 (IVNA…VYHF), 63-83 (GGTF…LVRI), 90-105 (WNSI…VLSI), and 115-128 (SAVM…VLNP).

It belongs to the Tim17/Tim22/Tim23 family. As to quaternary structure, component of the TIM17:23 complex at least composed of TIM23, TIM17 and TIM50. The complex interacts with the TIM44 component of the PAM complex. As to expression, expressed in cotyledons, roots, flowers and leaves.

It localises to the mitochondrion inner membrane. In terms of biological role, essential component of the TIM17:23 complex, a complex that mediates the translocation of transit peptide-containing proteins across the mitochondrial inner membrane. Links the inner and outer membranes. This is Mitochondrial import inner membrane translocase subunit TIM17-3 (TIM17-3) from Arabidopsis thaliana (Mouse-ear cress).